A 465-amino-acid chain; its full sequence is Probable Xaa-Pro aminopeptidase pepP (465 aa).

4 residues coordinate Mn(2+): Asp-263, Asp-274, Glu-397, and Glu-437.

Belongs to the peptidase M24B family. The cofactor is Mn(2+).

The catalysed reaction is Release of any N-terminal amino acid, including proline, that is linked to proline, even from a dipeptide or tripeptide.. Catalyzes the removal of a penultimate prolyl residue from the N-termini of peptides. This chain is Probable Xaa-Pro aminopeptidase pepP (pepP), found in Emericella nidulans (strain FGSC A4 / ATCC 38163 / CBS 112.46 / NRRL 194 / M139) (Aspergillus nidulans).